A 193-amino-acid chain; its full sequence is RNA pyrophosphohydrolase (193 aa).

The Nudix hydrolase domain maps to 6 to 149 (GFRPNVGIIL…KRDVYQRALQ (144 aa)). Positions 38–59 (GGIKFGETPEQAMFRELEEEVG) match the Nudix box motif. Residues 174 to 193 (THSARKTDEPSTEQTKPNNE) are disordered.

The protein belongs to the Nudix hydrolase family. RppH subfamily. The cofactor is a divalent metal cation.

Its function is as follows. Accelerates the degradation of transcripts by removing pyrophosphate from the 5'-end of triphosphorylated RNA, leading to a more labile monophosphorylated state that can stimulate subsequent ribonuclease cleavage. The protein is RNA pyrophosphohydrolase of Herminiimonas arsenicoxydans.